A 230-amino-acid polypeptide reads, in one-letter code: Cyclin-U2-2 (230 aa).

Belongs to the cyclin family. Cyclin U/P subfamily. In terms of assembly, interacts with CDKA-1. In terms of tissue distribution, expressed in roots and stems. Expressed in the shoot apex, leaf primordia and young leaves.

This is Cyclin-U2-2 (CYCU2-2) from Arabidopsis thaliana (Mouse-ear cress).